Here is a 215-residue protein sequence, read N- to C-terminus: Pyrophosphatase PpaX (215 aa).

Residue Asp9 is the Nucleophile of the active site.

The protein belongs to the HAD-like hydrolase superfamily. PpaX family. Requires Mg(2+) as cofactor.

It carries out the reaction diphosphate + H2O = 2 phosphate + H(+). Hydrolyzes pyrophosphate formed during P-Ser-HPr dephosphorylation by HPrK/P. Might play a role in controlling the intracellular pyrophosphate pool. The chain is Pyrophosphatase PpaX from Halalkalibacterium halodurans (strain ATCC BAA-125 / DSM 18197 / FERM 7344 / JCM 9153 / C-125) (Bacillus halodurans).